The following is a 185-amino-acid chain: Large ribosomal subunit protein uL5 (185 aa).

Belongs to the universal ribosomal protein uL5 family. Part of the 50S ribosomal subunit; part of the 5S rRNA/L5/L18/L25 subcomplex. Contacts the 5S rRNA and the P site tRNA. Forms a bridge to the 30S subunit in the 70S ribosome.

In terms of biological role, this is one of the proteins that bind and probably mediate the attachment of the 5S RNA into the large ribosomal subunit, where it forms part of the central protuberance. In the 70S ribosome it contacts protein S13 of the 30S subunit (bridge B1b), connecting the 2 subunits; this bridge is implicated in subunit movement. Contacts the P site tRNA; the 5S rRNA and some of its associated proteins might help stabilize positioning of ribosome-bound tRNAs. The sequence is that of Large ribosomal subunit protein uL5 from Xanthobacter autotrophicus (strain ATCC BAA-1158 / Py2).